The primary structure comprises 300 residues: GTPase Era (300 aa).

Positions 6 to 173 constitute an Era-type G domain; the sequence is KSGFLSIIGR…VDVLKEHLPE (168 aa). Residues 14-21 are G1; it reads GRPNVGKS. 14–21 is a binding site for GTP; the sequence is GRPNVGKS. A G2 region spans residues 40-44; sequence QTTRN. The segment at 61–64 is G3; sequence DTPG. GTP is bound by residues 61 to 65 and 123 to 126; these read DTPGI and NKID. The G4 stretch occupies residues 123–126; it reads NKID. Residues 152–154 are G5; that stretch reads ISA. The KH type-2 domain occupies 204 to 281; the sequence is TKEEVPHSIA…YLELWIKVKK (78 aa).

It belongs to the TRAFAC class TrmE-Era-EngA-EngB-Septin-like GTPase superfamily. Era GTPase family. In terms of assembly, monomer.

Its subcellular location is the cytoplasm. The protein localises to the cell membrane. An essential GTPase that binds both GDP and GTP, with rapid nucleotide exchange. Plays a role in 16S rRNA processing and 30S ribosomal subunit biogenesis and possibly also in cell cycle regulation and energy metabolism. The protein is GTPase Era of Oceanobacillus iheyensis (strain DSM 14371 / CIP 107618 / JCM 11309 / KCTC 3954 / HTE831).